The sequence spans 206 residues: Small ribosomal subunit protein uS4 (206 aa).

The 61-residue stretch at 96-156 (GRLDNVVYRM…EKSKKQARIK (61 aa)) folds into the S4 RNA-binding domain.

This sequence belongs to the universal ribosomal protein uS4 family. Part of the 30S ribosomal subunit. Contacts protein S5. The interaction surface between S4 and S5 is involved in control of translational fidelity.

Functionally, one of the primary rRNA binding proteins, it binds directly to 16S rRNA where it nucleates assembly of the body of the 30S subunit. In terms of biological role, with S5 and S12 plays an important role in translational accuracy. The polypeptide is Small ribosomal subunit protein uS4 (Histophilus somni (strain 129Pt) (Haemophilus somnus)).